The chain runs to 119 residues: uncharacterized protein (119 aa).

Residues 86-119 form a disordered region; that stretch reads KKQRMKMLTEQEEEEEEEEEEPPKPKKKVINRKK. Positions 95 to 106 are enriched in acidic residues; sequence EQEEEEEEEEEE. Residues 110–119 show a composition bias toward basic residues; the sequence is PKKKVINRKK.

This is an uncharacterized protein from Sputnik virophage.